Consider the following 414-residue polypeptide: Particulate methane monooxygenase alpha subunit (414 aa).

The signal sequence occupies residues 1–32; the sequence is MKTIKDRIAKWSAIGLLSAVAATAFYAPSASA. The Cu cation site is built by His33, His48, His72, His137, and His139. The tract at residues 33-172 is cupredoxin domain used to construct soluble pmoB (spmoB); the sequence is HGEKSQAAFM…MSEFRNPVTT (140 aa). A run of 2 helical transmembrane segments spans residues 186–206 and 235–255; these read GNTY…IGYW and VAMG…SSAN. A cupredoxin domain used to construct soluble pmoB (spmoB) region spans residues 265-414; that stretch reads QAGTMRGMKP…IDAPLIPSFM (150 aa).

As to quaternary structure, m.capsulatus has two forms of methane monooxygenase, a soluble (sMMO) and a membrane-bound (particulate) type (pMMO). The particulate type is a nonamer composed of three alpha:beta:gamma heterotrimeric protomers assembled into a cylindrical structure; the beta and gamma subunits comprise the bulk of the membrane-spanning regions and the soluble regions are derived primarily from alpha subunits which form two antiparallel beta-barrel-like structures each. This assembly, also called pMMO hydroxylase (pMMO-H), is proposed to associate with methanol dehydrogenase (MDH), also designated as pMMO-R, to form the pMMO-C complex which seems to have greater methane monooxygenase activity. Cu(2+) serves as cofactor.

The protein resides in the membrane. It catalyses the reaction methane + a quinol + O2 = methanol + a quinone + H2O. Its function is as follows. Methane monooxygenase is responsible for the initial oxygenation of methane to methanol in methanotrophs. At least in vitro, specific quinols can replace NADH as reductants. The sequence is that of Particulate methane monooxygenase alpha subunit (pmoB1) from Methylococcus capsulatus (strain ATCC 33009 / NCIMB 11132 / Bath).